Reading from the N-terminus, the 137-residue chain is AVCVSLLGAANIPPHPLNLINFMEMIRYTIPCEKTWGEYADYGCYCGAGGSGRPIDALDRCCYVHDNCYGDAEKKHKCNPKTQSYSYKLTKRTIICYGAAGTCARIVCDCDRTAALCFGDSEYIERHKNIDTARFCQ.

Residues 1–9 (AVCVSLLGA) form the signal peptide. A propeptide spanning residues 10–17 (ANIPPHPL) is cleaved from the precursor. 6 disulfides stabilise this stretch: C44-C136, C46-C62, C61-C117, C68-C110, C78-C103, and C96-C108. Ca(2+)-binding residues include Y45, G47, and G49. H65 is a catalytic residue. D66 lines the Ca(2+) pocket. The active site involves D111.

It belongs to the phospholipase A2 family. Group I subfamily. D49 sub-subfamily. Heterodimer; disulfide-linked. The A chain has phospholipase A2 activity and the B chain shows homology with the basic protease inhibitors. The cofactor is Ca(2+). Expressed by the venom gland.

The protein localises to the secreted. The catalysed reaction is a 1,2-diacyl-sn-glycero-3-phosphocholine + H2O = a 1-acyl-sn-glycero-3-phosphocholine + a fatty acid + H(+). Functionally, snake venom phospholipase A2 (PLA2) that shows presynaptic neurotoxicity. The A chain has phospholipase activity. PLA2 catalyzes the calcium-dependent hydrolysis of the 2-acyl groups in 3-sn-phosphoglycerides. The polypeptide is Basic phospholipase A2 beta-bungarotoxin A1 chain (Bungarus candidus (Malayan krait)).